A 330-amino-acid chain; its full sequence is 3',5'-cyclic-nucleotide phosphodiesterase (330 aa).

Positions 1 to 22 are cleaved as a signal peptide; that stretch reads MFKNKLAVLFTCLSVFSFSAQS.

Belongs to the cyclic nucleotide phosphodiesterase class-II family.

Its subcellular location is the periplasm. The enzyme catalyses a nucleoside 3',5'-cyclic phosphate + H2O = a nucleoside 5'-phosphate + H(+). Its function is as follows. Seems to allow the organism to grow on cAMP. In Aliivibrio fischeri (Vibrio fischeri), this protein is 3',5'-cyclic-nucleotide phosphodiesterase (cpdP).